The primary structure comprises 294 residues: ATP synthase gamma chain (294 aa).

Belongs to the ATPase gamma chain family. F-type ATPases have 2 components, CF(1) - the catalytic core - and CF(0) - the membrane proton channel. CF(1) has five subunits: alpha(3), beta(3), gamma(1), delta(1), epsilon(1). CF(0) has three main subunits: a, b and c.

Its subcellular location is the cell inner membrane. Produces ATP from ADP in the presence of a proton gradient across the membrane. The gamma chain is believed to be important in regulating ATPase activity and the flow of protons through the CF(0) complex. In Nitrosomonas europaea (strain ATCC 19718 / CIP 103999 / KCTC 2705 / NBRC 14298), this protein is ATP synthase gamma chain.